A 419-amino-acid chain; its full sequence is Putative zinc metalloprotease M6_Spy1682 (419 aa).

Zn(2+) is bound at residue His-18. Residue Glu-19 is part of the active site. His-22 provides a ligand contact to Zn(2+). 4 helical membrane-spanning segments follow: residues 169-191, 301-323, 343-365, and 392-411; these read LITN…ILLV, LAWS…FSLN, LESV…LIPI, and AYIT…AVTW. The region spanning 175–274 is the PDZ domain; sequence GPMNNFILGI…LKTVAVKPQK (100 aa).

Belongs to the peptidase M50B family. Zn(2+) serves as cofactor.

Its subcellular location is the cell membrane. In Streptococcus pyogenes serotype M6 (strain ATCC BAA-946 / MGAS10394), this protein is Putative zinc metalloprotease M6_Spy1682.